The chain runs to 194 residues: A-type ATP synthase subunit E (194 aa).

Residues 35 to 56 (DAEADADQIREEREAEVERTIE) form a disordered region. Residues 41 to 56 (DQIREEREAEVERTIE) show a composition bias toward basic and acidic residues.

Belongs to the V-ATPase E subunit family. Has multiple subunits with at least A(3), B(3), C, D, E, F, H, I and proteolipid K(x).

The protein resides in the cell membrane. Component of the A-type ATP synthase that produces ATP from ADP in the presence of a proton gradient across the membrane. The chain is A-type ATP synthase subunit E from Haloarcula marismortui (strain ATCC 43049 / DSM 3752 / JCM 8966 / VKM B-1809) (Halobacterium marismortui).